The following is a 51-amino-acid chain: Glutamine synthetase (51 aa).

This sequence belongs to the glutamine synthetase family. Homooctamer.

The protein resides in the cytoplasm. The enzyme catalyses L-glutamate + NH4(+) + ATP = L-glutamine + ADP + phosphate + H(+). This is Glutamine synthetase from Vitis sp. (Grape).